We begin with the raw amino-acid sequence, 235 residues long: Orotidine 5'-phosphate decarboxylase (235 aa).

Substrate is bound by residues aspartate 12, lysine 34, aspartate 61 to threonine 70, threonine 116, arginine 177, glutamine 186, and arginine 207. Lysine 63 serves as the catalytic Proton donor.

Belongs to the OMP decarboxylase family. Type 1 subfamily. In terms of assembly, homodimer.

It carries out the reaction orotidine 5'-phosphate + H(+) = UMP + CO2. The protein operates within pyrimidine metabolism; UMP biosynthesis via de novo pathway; UMP from orotate: step 2/2. Its function is as follows. Catalyzes the decarboxylation of orotidine 5'-monophosphate (OMP) to uridine 5'-monophosphate (UMP). The chain is Orotidine 5'-phosphate decarboxylase from Rhizobium etli (strain CIAT 652).